Consider the following 431-residue polypeptide: MSLMTKLGFRALVASCLITAGSAANAQVNVLITGVGSTQFPIATANFTNEANLPQQVTSIVRADLARSGKFTNIDAGSTPVPETASVDLGAWKAKGANAFVAGSVNREANGQYKVNFILYDTVKQQSLGGLSLTATDTTLRTAGHKIADYIYQKLLGVRGVFATRLSYVIKTGNRYQLQISDSDGQNARIALSSTEPIISPAWSPSGTKVAYVSFERKKPIVYIHDLPTGRRYMVSDQKGNNSAPAWSPDSNTLAVALSLTGNTQIYTVNANGGGLRRLTQSSSIDTEPFYSPDGRWIYFTSDRGGAPQIYRMPAQGESAGAAQRVTFTGSYNTSPRVSPDGKLLAYISRTGGGFKLYVQDLQTGAANAITNTNRDESPSFAANGQYLLYATQSGGRNVLAAVPSDGSAPPQILSVQGGSVREPSWGPFMQ.

A signal peptide spans 1 to 26 (MSLMTKLGFRALVASCLITAGSAANA). Residues 406 to 431 (DGSAPPQILSVQGGSVREPSWGPFMQ) are disordered.

This sequence belongs to the TolB family. The Tol-Pal system is composed of five core proteins: the inner membrane proteins TolA, TolQ and TolR, the periplasmic protein TolB and the outer membrane protein Pal. They form a network linking the inner and outer membranes and the peptidoglycan layer.

The protein localises to the periplasm. Functionally, part of the Tol-Pal system, which plays a role in outer membrane invagination during cell division and is important for maintaining outer membrane integrity. The chain is Tol-Pal system protein TolB from Burkholderia cenocepacia (strain ATCC BAA-245 / DSM 16553 / LMG 16656 / NCTC 13227 / J2315 / CF5610) (Burkholderia cepacia (strain J2315)).